Here is a 45-residue protein sequence, read N- to C-terminus: Cytochrome c6 (45 aa).

Heme c is bound by residues cysteine 12, cysteine 15, and histidine 16.

It belongs to the cytochrome c family. PetJ subfamily. As to quaternary structure, monomer. Post-translationally, binds 1 heme c group covalently per subunit.

The protein resides in the cellular thylakoid lumen. In terms of biological role, functions as an electron carrier between membrane-bound cytochrome b6-f and photosystem I in oxygenic photosynthesis. The protein is Cytochrome c6 (petJ) of Prochlorothrix hollandica.